Here is a 171-residue protein sequence, read N- to C-terminus: UPF0763 protein Hac_0849 (171 aa).

This sequence belongs to the UPF0763 family.

This is UPF0763 protein Hac_0849 from Helicobacter acinonychis (strain Sheeba).